The following is a 640-amino-acid chain: Rab proteins geranylgeranyltransferase component A (640 aa).

Disordered regions lie at residues 414–439 (DILG…NNNN) and 594–640 (HNEN…EMEL). Residues 419–439 (NNNNNNNNNNNNNNNNNNNNN) show a composition bias toward low complexity. Over residues 604–624 (IDSDEDEDEDINDMNDNEEED) the composition is skewed to acidic residues.

Belongs to the Rab GDI family.

In terms of biological role, substrate-binding subunit (component A) of the Rab geranylgeranyltransferase (GGTase) complex. Binds unprenylated Rab proteins and presents the substrate peptide to the catalytic component B. The component A is thought to be regenerated by transferring its prenylated Rab back to the donor membrane. This chain is Rab proteins geranylgeranyltransferase component A (MRS6), found in Candida albicans (Yeast).